The primary structure comprises 273 residues: Bis(5'-nucleosyl)-tetraphosphatase, symmetrical (273 aa).

It belongs to the Ap4A hydrolase family.

The enzyme catalyses P(1),P(4)-bis(5'-adenosyl) tetraphosphate + H2O = 2 ADP + 2 H(+). Its function is as follows. Hydrolyzes diadenosine 5',5'''-P1,P4-tetraphosphate to yield ADP. The protein is Bis(5'-nucleosyl)-tetraphosphatase, symmetrical of Aliivibrio salmonicida (strain LFI1238) (Vibrio salmonicida (strain LFI1238)).